A 255-amino-acid polypeptide reads, in one-letter code: Hydroxyacylglutathione hydrolase (255 aa).

7 residues coordinate Zn(2+): His56, His58, Asp60, His61, His114, Asp133, and His171.

Belongs to the metallo-beta-lactamase superfamily. Glyoxalase II family. Monomer. It depends on Zn(2+) as a cofactor.

The catalysed reaction is an S-(2-hydroxyacyl)glutathione + H2O = a 2-hydroxy carboxylate + glutathione + H(+). The protein operates within secondary metabolite metabolism; methylglyoxal degradation; (R)-lactate from methylglyoxal: step 2/2. Functionally, thiolesterase that catalyzes the hydrolysis of S-D-lactoyl-glutathione to form glutathione and D-lactic acid. The chain is Hydroxyacylglutathione hydrolase from Mesorhizobium japonicum (strain LMG 29417 / CECT 9101 / MAFF 303099) (Mesorhizobium loti (strain MAFF 303099)).